The following is a 1521-amino-acid chain: Retroelement silencing factor 1 (1521 aa).

Lys-223 is covalently cross-linked (Glycyl lysine isopeptide (Lys-Gly) (interchain with G-Cter in SUMO2)). The disordered stretch occupies residues Glu-621–Lys-640. Ser-910 bears the Phosphoserine mark. At Thr-996 the chain carries Phosphothreonine. 2 stretches are compositionally biased toward polar residues: residues Lys-1093–Ser-1105 and Leu-1124–Ser-1142. Disordered regions lie at residues Lys-1093 to Lys-1147, Glu-1204 to Arg-1230, and Glu-1312 to Met-1335. Ser-1142 carries the phosphoserine modification. Residues Pro-1214–Ser-1228 are compositionally biased toward low complexity. Basic and acidic residues predominate over residues Gly-1325–Met-1335. Residue Lys-1411 forms a Glycyl lysine isopeptide (Lys-Gly) (interchain with G-Cter in SUMO2) linkage. 2 disordered regions span residues Asp-1425–Ser-1444 and Ile-1457–Glu-1485. Residues Ser-1467–Leu-1476 show a composition bias toward basic and acidic residues. A phosphoserine mark is found at Ser-1482 and Ser-1514.

Interacts with SETDB1.

It is found in the nucleus. In terms of biological role, plays a role in the regulation of imprinted gene expression, regulates repressive epigenetic modifications associated with SETDB1. Required for the recruitment or accumulation of SETDB1 to the endogenous retroviruses (ERVs) and maintenance of repressive chromatin configuration, contributing to a subset of the SETDB1-dependent ERV silencing in embryonic stem cells. In Mus musculus (Mouse), this protein is Retroelement silencing factor 1.